Consider the following 85-residue polypeptide: Probable Thioredoxin (85 aa).

The 84-residue stretch at Val2–Glu85 folds into the Glutaredoxin domain. Cys13 and Cys16 are disulfide-bonded.

It belongs to the glutaredoxin family.

The protein resides in the cytoplasm. Does not function as a glutathione-disulfide oxidoreductase in the presence of glutathione and glutathione reductase. May be a component of a ribonucleotide-reducing system distinct from the previously described systems utilizing thioredoxin or glutaredoxin. The protein is Probable Thioredoxin of Methanothermobacter marburgensis (strain ATCC BAA-927 / DSM 2133 / JCM 14651 / NBRC 100331 / OCM 82 / Marburg) (Methanobacterium thermoautotrophicum).